The sequence spans 468 residues: Transmembrane protein 151B (468 aa).

The segment at 1–25 (MPEDGGGDSGDVPEIIPDGEPLREE) is disordered. Transmembrane regions (helical) follow at residues 45-65 (CLLLTLLIHACGAVVAWCRLA) and 98-118 (YLYIPLAFVSLLYLLYLAECW). Residues 384–438 (VSSNSLPPARPSGPRLPFSRSRLSLGAGGRATPGVFRSLSGGPLGRRGEDTEPLE) form a disordered region.

Belongs to the TMEM151 family.

It is found in the membrane. This is Transmembrane protein 151B (TMEM151B) from Bos taurus (Bovine).